The following is a 132-amino-acid chain: Small ribosomal subunit protein uS8 (132 aa).

Belongs to the universal ribosomal protein uS8 family. In terms of assembly, part of the 30S ribosomal subunit. Contacts proteins S5 and S12.

In terms of biological role, one of the primary rRNA binding proteins, it binds directly to 16S rRNA central domain where it helps coordinate assembly of the platform of the 30S subunit. The chain is Small ribosomal subunit protein uS8 from Granulibacter bethesdensis (strain ATCC BAA-1260 / CGDNIH1).